A 421-amino-acid polypeptide reads, in one-letter code: D-amino acid dehydrogenase (421 aa).

Val-3 to Tyr-17 provides a ligand contact to FAD.

Belongs to the DadA oxidoreductase family. Requires FAD as cofactor.

The enzyme catalyses a D-alpha-amino acid + A + H2O = a 2-oxocarboxylate + AH2 + NH4(+). It functions in the pathway amino-acid degradation; D-alanine degradation; NH(3) and pyruvate from D-alanine: step 1/1. Oxidative deamination of D-amino acids. This chain is D-amino acid dehydrogenase, found in Acinetobacter baumannii (strain ATCC 17978 / DSM 105126 / CIP 53.77 / LMG 1025 / NCDC KC755 / 5377).